A 1390-amino-acid chain; its full sequence is Hepatocyte growth factor receptor (1390 aa).

Residues 1–24 form the signal peptide; that stretch reads MKTPAVLAPGILVLLFTLVQRSNG. Residues 25-932 are Extracellular-facing; the sequence is ECKEALAKSK…VIVQPDQNFT (908 aa). The Sema domain maps to 27 to 515; the sequence is KEALAKSKMN…TGKKITKIPL (489 aa). Residue asparagine 45 is glycosylated (N-linked (GlcNAc...) asparagine). 4 disulfides stabilise this stretch: cysteine 95–cysteine 101, cysteine 98–cysteine 160, cysteine 133–cysteine 141, and cysteine 172–cysteine 175. A glycan (N-linked (GlcNAc...) asparagine) is linked at asparagine 106. N-linked (GlcNAc...) asparagine glycosylation occurs at asparagine 149. Asparagine 202 carries an N-linked (GlcNAc...) asparagine glycan. 2 disulfide bridges follow: cysteine 298-cysteine 363 and cysteine 385-cysteine 397. N-linked (GlcNAc...) asparagine glycans are attached at residues asparagine 399 and asparagine 405. Cystine bridges form between cysteine 520/cysteine 538, cysteine 526/cysteine 561, cysteine 529/cysteine 545, and cysteine 541/cysteine 551. 3 consecutive IPT/TIG domains span residues 563-655, 657-739, and 742-836; these read PAIY…FSYV, PVIT…FSYR, and PIVY…LIYV. Residue threonine 582 is glycosylated (O-linked (Man) threonine). 2 N-linked (GlcNAc...) asparagine glycosylation sites follow: asparagine 607 and asparagine 635. Threonine 676 and threonine 761 each carry an O-linked (Man) threonine glycan. Residues asparagine 785, asparagine 879, and asparagine 930 are each glycosylated (N-linked (GlcNAc...) asparagine). Residues 933-955 traverse the membrane as a helical segment; it reads GLIAGVVSISVALLLLLGFFLWL. Topologically, residues 956-1390 are cytoplasmic; the sequence is KKRKQIKDLG…TRPASFWETS (435 aa). A Phosphoserine modification is found at serine 966. Threonine 977 is modified (phosphothreonine). Residues serine 990, serine 997, and serine 1000 each carry the phosphoserine modification. A Phosphotyrosine modification is found at tyrosine 1003. A Protein kinase domain is found at 1078 to 1345; the sequence is VHFNEVIGRG…RISAIFSTFI (268 aa). ATP contacts are provided by residues 1084-1092 and lysine 1110; that span reads IGRGHFGCV. The Proton acceptor role is filled by aspartate 1204. The segment at 1212 to 1381 is interaction with RANBP9; it reads LDEKFTVKVA…EDNADNEVDT (170 aa). Position 1230 is a phosphotyrosine (tyrosine 1230). Residues tyrosine 1234 and tyrosine 1235 each carry the phosphotyrosine; by autocatalysis modification. Threonine 1289 bears the Phosphothreonine mark. Positions 1320-1359 are interaction with MUC20; that stretch reads WHPKAEMRPSFSELVSRISAIFSTFIGEHYVHVNATYVNV. Phosphotyrosine; by autocatalysis is present on residues tyrosine 1349 and tyrosine 1356. Tyrosine 1365 is subject to Phosphotyrosine.

This sequence belongs to the protein kinase superfamily. Tyr protein kinase family. As to quaternary structure, heterodimer made of an alpha chain (50 kDa) and a beta chain (145 kDa) which are disulfide linked. Binds PLXNB1. Interacts when phosphorylated with downstream effectors including STAT3, PIK3R1, SRC, PCLG1, GRB2 and GAB1. Interacts with SPSB1, SPSB2 and SPSB4. Interacts with INPP5D/SHIP1. When phosphorylated at Tyr-1356, interacts with INPPL1/SHIP2. Interacts with RANBP9 and RANBP10, as well as SPSB1, SPSB2, SPSB3 and SPSB4. SPSB1 binding occurs in the presence and in the absence of HGF, however HGF treatment has a positive effect on this interaction. Interacts with MUC20; prevents interaction with GRB2 and suppresses hepatocyte growth factor-induced cell proliferation. Interacts with GRB10. Interacts with PTPN1 and PTPN2. Interacts with HSP90AA1 and HSP90AB1; the interaction suppresses MET kinase activity. Interacts with tensin TNS3. Interacts (when phosphorylated) with tensin TNS4 (via SH2 domain); the interaction increases MET protein stability by inhibiting MET endocytosis and subsequent lysosomal degradation. In terms of processing, autophosphorylated in response to ligand binding on Tyr-1234 and Tyr-1235 in the kinase domain leading to further phosphorylation of Tyr-1349 and Tyr-1356 in the C-terminal multifunctional docking site. Dephosphorylated by PTPRJ at Tyr-1349 and Tyr-1365. Dephosphorylated by PTPN1 and PTPN2. Ubiquitinated. Ubiquitination by CBL regulates the receptor stability and activity through proteasomal degradation. Post-translationally, O-mannosylation of IPT/TIG domains by TMEM260 is required for protein maturation. O-mannosylated residues are composed of single mannose glycans that are not elongated or modified.

The protein localises to the membrane. The enzyme catalyses L-tyrosyl-[protein] + ATP = O-phospho-L-tyrosyl-[protein] + ADP + H(+). In its inactive state, the C-terminal tail interacts with the catalytic domain and inhibits the kinase activity. Upon ligand binding, the C-terminal tail is displaced and becomes phosphorylated, thus increasing the kinase activity. Receptor tyrosine kinase that transduces signals from the extracellular matrix into the cytoplasm by binding to hepatocyte growth factor/HGF ligand. Regulates many physiological processes including proliferation, scattering, morphogenesis and survival. Ligand binding at the cell surface induces autophosphorylation of MET on its intracellular domain that provides docking sites for downstream signaling molecules. Following activation by ligand, interacts with the PI3-kinase subunit PIK3R1, PLCG1, SRC, GRB2, STAT3 or the adapter GAB1. Recruitment of these downstream effectors by MET leads to the activation of several signaling cascades including the RAS-ERK, PI3 kinase-AKT, or PLCgamma-PKC. The RAS-ERK activation is associated with the morphogenetic effects while PI3K/AKT coordinates prosurvival effects. During embryonic development, MET signaling plays a role in gastrulation, development and migration of muscles and neuronal precursors, angiogenesis and kidney formation. In adults, participates in wound healing as well as organ regeneration and tissue remodeling. Also promotes differentiation and proliferation of hematopoietic cells. The chain is Hepatocyte growth factor receptor (MET) from Nomascus leucogenys (Northern white-cheeked gibbon).